We begin with the raw amino-acid sequence, 147 residues long: Hemoglobin subunit gamma-1 (147 aa).

One can recognise a Globin domain in the interval 3–147; the sequence is NFTAEDKAAI…VASALGSRYH (145 aa). Residue Thr13 is modified to Phosphothreonine. Ser45, Ser51, and Ser53 each carry phosphoserine. Lys60 carries the post-translational modification N6-acetyllysine. His64 contacts heme b. Lys83 carries the post-translational modification N6-acetyllysine. His93 contacts heme b. Cys94 bears the S-nitrosocysteine mark. Phosphoserine is present on Ser140.

Belongs to the globin family. As to quaternary structure, heterotetramer of two alpha chains and two gamma chains in fetal hemoglobin (Hb F). Red blood cells.

Gamma chains make up the fetal hemoglobin F, in combination with alpha chains. The protein is Hemoglobin subunit gamma-1 (HBG1) of Plecturocebus moloch (Dusky titi monkey).